We begin with the raw amino-acid sequence, 458 residues long: NADH-quinone oxidoreductase subunit N 1 (458 aa).

14 consecutive transmembrane segments (helical) span residues 12-32, 37-57, 70-90, 101-121, 124-144, 159-179, 199-219, 230-250, 266-286, 293-313, 321-341, 361-381, 393-413, and 438-458; these read ALIPEITLTGFASLILLAGLL, EVLVWSSVLFLVIFAFFIPSF, FLTIYLKLIIIIGTIISLLVL, FNESIAFILFSALGMMLLVSA, LISFFLSFELMSLSIYVLVGI, FMLGGFSSAIMLFGIAFIYGA, ILIGLGLFIVGLCFKIALVPF, APTPVTAFISTLPKVAILGAF, SNFLIVLSIATMATGNFFALI, MLAYSSIAHAGYIIIGVIVGT, VAYMFIYTLMNIGAFAMVIAF, IAMLIFMFSLTGVPPTAGFIV, GFTWLVVIAVIFTVISAYYYL, and VAILICTIGVTFLGILPLFLI.

Belongs to the complex I subunit 2 family. NDH-1 is composed of 14 different subunits. Subunits NuoA, H, J, K, L, M, N constitute the membrane sector of the complex.

Its subcellular location is the cell inner membrane. It carries out the reaction a quinone + NADH + 5 H(+)(in) = a quinol + NAD(+) + 4 H(+)(out). Functionally, NDH-1 shuttles electrons from NADH, via FMN and iron-sulfur (Fe-S) centers, to quinones in the respiratory chain. The immediate electron acceptor for the enzyme in this species is believed to be ubiquinone. Couples the redox reaction to proton translocation (for every two electrons transferred, four hydrogen ions are translocated across the cytoplasmic membrane), and thus conserves the redox energy in a proton gradient. This Thermodesulfovibrio yellowstonii (strain ATCC 51303 / DSM 11347 / YP87) protein is NADH-quinone oxidoreductase subunit N 1.